The primary structure comprises 449 residues: Ribulose bisphosphate carboxylase large chain (449 aa).

An N6,N6,N6-trimethyllysine modification is found at Lys-7. Asn-116 and Thr-166 together coordinate substrate. The Proton acceptor role is filled by Lys-168. Lys-170 is a substrate binding site. Positions 194, 196, and 197 each coordinate Mg(2+). Residue Lys-194 is modified to N6-carboxylysine. His-287 functions as the Proton acceptor in the catalytic mechanism. Arg-288, His-320, and Ser-372 together coordinate substrate.

This sequence belongs to the RuBisCO large chain family. Type I subfamily. Heterohexadecamer of 8 large chains and 8 small chains; disulfide-linked. The disulfide link is formed within the large subunit homodimers. The cofactor is Mg(2+). Post-translationally, the disulfide bond which can form in the large chain dimeric partners within the hexadecamer appears to be associated with oxidative stress and protein turnover.

The protein resides in the plastid. The protein localises to the chloroplast. It catalyses the reaction 2 (2R)-3-phosphoglycerate + 2 H(+) = D-ribulose 1,5-bisphosphate + CO2 + H2O. It carries out the reaction D-ribulose 1,5-bisphosphate + O2 = 2-phosphoglycolate + (2R)-3-phosphoglycerate + 2 H(+). In terms of biological role, ruBisCO catalyzes two reactions: the carboxylation of D-ribulose 1,5-bisphosphate, the primary event in carbon dioxide fixation, as well as the oxidative fragmentation of the pentose substrate in the photorespiration process. Both reactions occur simultaneously and in competition at the same active site. This Liriope muscari (Big blue lilyturf) protein is Ribulose bisphosphate carboxylase large chain.